A 248-amino-acid chain; its full sequence is ATP synthase subunit a, chloroplastic (248 aa).

5 helical membrane passes run G35–G55, I94–I114, I133–S153, V202–A222, and S224–G244.

The protein belongs to the ATPase A chain family. F-type ATPases have 2 components, CF(1) - the catalytic core - and CF(0) - the membrane proton channel. CF(1) has five subunits: alpha(3), beta(3), gamma(1), delta(1), epsilon(1). CF(0) has four main subunits: a, b, b' and c.

It is found in the plastid. The protein localises to the chloroplast thylakoid membrane. Functionally, key component of the proton channel; it plays a direct role in the translocation of protons across the membrane. The polypeptide is ATP synthase subunit a, chloroplastic (Antithamnion sp. (Red alga)).